The chain runs to 345 residues: Tryptophan--tRNA ligase (345 aa).

Residues 21–23 and 30–31 each bind ATP; these read QPT and GN. Residues 22-31 carry the 'HIGH' region motif; it reads PTADSYHLGN. Asp-147 contacts L-tryptophan. ATP-binding positions include 159-161, Ile-198, and 207-211; these read GED and KMSKS. Residues 207 to 211 carry the 'KMSKS' region motif; that stretch reads KMSKS.

The protein belongs to the class-I aminoacyl-tRNA synthetase family. As to quaternary structure, homodimer.

The protein localises to the cytoplasm. It carries out the reaction tRNA(Trp) + L-tryptophan + ATP = L-tryptophyl-tRNA(Trp) + AMP + diphosphate + H(+). In terms of biological role, catalyzes the attachment of tryptophan to tRNA(Trp). The chain is Tryptophan--tRNA ligase from Corynebacterium glutamicum (strain ATCC 13032 / DSM 20300 / JCM 1318 / BCRC 11384 / CCUG 27702 / LMG 3730 / NBRC 12168 / NCIMB 10025 / NRRL B-2784 / 534).